Reading from the N-terminus, the 358-residue chain is Homoserine O-acetyltransferase (358 aa).

In terms of domain architecture, AB hydrolase-1 spans 52-337 (NVILICHALT…DEPYGHDAFL (286 aa)). The Nucleophile role is filled by serine 148. Arginine 217 lines the substrate pocket. Catalysis depends on residues aspartate 304 and histidine 333. Aspartate 334 lines the substrate pocket.

Belongs to the AB hydrolase superfamily. MetX family. As to quaternary structure, homodimer.

Its subcellular location is the cytoplasm. The enzyme catalyses L-homoserine + acetyl-CoA = O-acetyl-L-homoserine + CoA. The protein operates within amino-acid biosynthesis; L-methionine biosynthesis via de novo pathway; O-acetyl-L-homoserine from L-homoserine: step 1/1. Its function is as follows. Transfers an acetyl group from acetyl-CoA to L-homoserine, forming acetyl-L-homoserine. This is Homoserine O-acetyltransferase from Chlorobium luteolum (strain DSM 273 / BCRC 81028 / 2530) (Pelodictyon luteolum).